The primary structure comprises 135 residues: Large ribosomal subunit protein uL18 (135 aa).

The segment at 1 to 25 (MAQTENQKSKRIPLGKDVSTQRRLS) is disordered.

The protein belongs to the universal ribosomal protein uL18 family. Part of the 50S ribosomal subunit; part of the 5S rRNA/L5/L18/L25 subcomplex. Contacts the 5S and 23S rRNAs.

In terms of biological role, this is one of the proteins that bind and probably mediate the attachment of the 5S RNA into the large ribosomal subunit, where it forms part of the central protuberance. This Nocardia farcinica (strain IFM 10152) protein is Large ribosomal subunit protein uL18.